We begin with the raw amino-acid sequence, 674 residues long: Tripartite terminase subunit 3 (674 aa).

The Walker A motif signature appears at 212–219; the sequence is VPRRHGKT. The short motif at 305–310 is the Walker B motif element; the sequence is LLLVDE. Glu310 (for ATPase activity) is an active-site residue. Catalysis depends on for nuclease activity residues Asp463 and Glu534. The required for interaction with UL56 and DNA packaging stretch occupies residues 580–600; it reads GRDKALAVEQFISRFNSGYIK. Asp651 (for nuclease activity) is an active-site residue.

Belongs to the herpesviridae TRM3 protein family. In terms of assembly, interacts with the terminase subunits TRM1 and TRM2. Interacts with portal protein.

Its subcellular location is the host nucleus. Its function is as follows. Component of the molecular motor that translocates viral genomic DNA in empty capsid during DNA packaging. Forms a tripartite terminase complex together with TRM1 and TRM2 in the host cytoplasm. Once the complex reaches the host nucleus, it interacts with the capsid portal vertex. This portal forms a ring in which genomic DNA is translocated into the capsid. TRM3 carries an RNase H-like nuclease activity that plays an important role for the cleavage of concatemeric viral DNA into unit length genomes. The polypeptide is Tripartite terminase subunit 3 (Homo sapiens (Human)).